The following is a 202-amino-acid chain: UPF0316 protein SH1041 (202 aa).

Transmembrane regions (helical) follow at residues 8 to 28 (PWSM…FLTM), 40 to 60 (MAAA…GMVM), and 66 to 86 (IQNI…GMKI).

Belongs to the UPF0316 family.

It localises to the cell membrane. This is UPF0316 protein SH1041 from Staphylococcus haemolyticus (strain JCSC1435).